Reading from the N-terminus, the 438-residue chain is Acid phosphatase type 7 (438 aa).

The first 23 residues, methionine 1–glycine 23, serve as a signal peptide directing secretion. Residues aspartate 141, aspartate 170, and tyrosine 173 each coordinate Fe cation. Aspartate 170 lines the Zn(2+) pocket. Asparagine 205 is a Zn(2+) binding site. Asparagine 211 is a glycosylation site (N-linked (GlcNAc...) asparagine). Zn(2+)-binding residues include histidine 286 and histidine 333. Position 335 (histidine 335) interacts with Fe cation. N-linked (GlcNAc...) asparagine glycosylation is found at asparagine 350 and asparagine 404.

This sequence belongs to the metallophosphoesterase superfamily. Purple acid phosphatase family. Fe cation is required as a cofactor. Requires Zn(2+) as cofactor.

Its subcellular location is the secreted. It carries out the reaction a phosphate monoester + H2O = an alcohol + phosphate. In Mus musculus (Mouse), this protein is Acid phosphatase type 7.